Here is a 216-residue protein sequence, read N- to C-terminus: Octanoyltransferase (216 aa).

In terms of domain architecture, BPL/LPL catalytic spans 35–213 (NSNPDFIWIG…IIQEEFNFDF (179 aa)). Substrate is bound by residues 77-84 (RGGEVTCH), 144-146 (SIG), and 157-159 (GFS). The active-site Acyl-thioester intermediate is cysteine 175.

It belongs to the LipB family.

The protein localises to the cytoplasm. The enzyme catalyses octanoyl-[ACP] + L-lysyl-[protein] = N(6)-octanoyl-L-lysyl-[protein] + holo-[ACP] + H(+). It participates in protein modification; protein lipoylation via endogenous pathway; protein N(6)-(lipoyl)lysine from octanoyl-[acyl-carrier-protein]: step 1/2. In terms of biological role, catalyzes the transfer of endogenously produced octanoic acid from octanoyl-acyl-carrier-protein onto the lipoyl domains of lipoate-dependent enzymes. Lipoyl-ACP can also act as a substrate although octanoyl-ACP is likely to be the physiological substrate. The chain is Octanoyltransferase from Prochlorococcus marinus (strain MIT 9215).